Here is a 473-residue protein sequence, read N- to C-terminus: Mannose-1-phosphate guanylyltransferase (473 aa).

This sequence belongs to the mannose-6-phosphate isomerase type 2 family. Homodimer.

It carries out the reaction alpha-D-mannose 1-phosphate + GTP + H(+) = GDP-alpha-D-mannose + diphosphate. It participates in nucleotide-sugar biosynthesis; GDP-alpha-D-mannose biosynthesis; GDP-alpha-D-mannose from alpha-D-mannose 1-phosphate (GTP route): step 1/1. It functions in the pathway bacterial outer membrane biogenesis; LPS O-antigen biosynthesis. In terms of biological role, involved in GDP-mannose biosynthesis which serves as the activated sugar nucleotide precursor for mannose residues in cell surface polysaccharides. This enzyme participates in synthesis of the LPS group C2 O antigen. In Salmonella muenchen, this protein is Mannose-1-phosphate guanylyltransferase (rfbM).